Here is a 305-residue protein sequence, read N- to C-terminus: tRNA dimethylallyltransferase (305 aa).

ATP is bound at residue 8–15 (GPTAVGKT). Substrate is bound at residue 10–15 (TAVGKT). Residues 33-36 (DSRQ) are interaction with substrate tRNA.

The protein belongs to the IPP transferase family. As to quaternary structure, monomer. Mg(2+) serves as cofactor.

It catalyses the reaction adenosine(37) in tRNA + dimethylallyl diphosphate = N(6)-dimethylallyladenosine(37) in tRNA + diphosphate. Catalyzes the transfer of a dimethylallyl group onto the adenine at position 37 in tRNAs that read codons beginning with uridine, leading to the formation of N6-(dimethylallyl)adenosine (i(6)A). This Thermotoga neapolitana (strain ATCC 49049 / DSM 4359 / NBRC 107923 / NS-E) protein is tRNA dimethylallyltransferase.